The chain runs to 511 residues: Maturase K (511 aa).

The protein belongs to the intron maturase 2 family. MatK subfamily.

The protein resides in the plastid. The protein localises to the chloroplast. Usually encoded in the trnK tRNA gene intron. Probably assists in splicing its own and other chloroplast group II introns. In Psathyrostachys juncea (Russian wildrye), this protein is Maturase K.